A 312-amino-acid chain; its full sequence is Ribonuclease H2 subunit B (312 aa).

The residue at position 2 (Ala2) is an N-acetylalanine. The disordered stretch occupies residues 236–256 (EPSASLPNPPSKKIKLSDEPV). Lys295 is subject to N6-acetyllysine. The residue at position 296 (Ser296) is a Phosphoserine.

Belongs to the RNase H2 subunit B family. In terms of assembly, the RNase H2 complex is a heterotrimer composed of the catalytic subunit RNASEH2A and the non-catalytic subunits RNASEH2B and RNASEH2C. Widely expressed.

It is found in the nucleus. In terms of biological role, non catalytic subunit of RNase H2, an endonuclease that specifically degrades the RNA of RNA:DNA hybrids. Participates in DNA replication, possibly by mediating the removal of lagging-strand Okazaki fragment RNA primers during DNA replication. Mediates the excision of single ribonucleotides from DNA:RNA duplexes. In Homo sapiens (Human), this protein is Ribonuclease H2 subunit B (RNASEH2B).